A 396-amino-acid chain; its full sequence is DNA polymerase IV (396 aa).

Positions isoleucine 6 to glycine 186 constitute a UmuC domain. Positions 10 and 104 each coordinate Mg(2+). Glutamate 105 is a catalytic residue.

Belongs to the DNA polymerase type-Y family. In terms of assembly, monomer. Mg(2+) is required as a cofactor.

Its subcellular location is the cytoplasm. The enzyme catalyses DNA(n) + a 2'-deoxyribonucleoside 5'-triphosphate = DNA(n+1) + diphosphate. Its function is as follows. Poorly processive, error-prone DNA polymerase involved in untargeted mutagenesis. Copies undamaged DNA at stalled replication forks, which arise in vivo from mismatched or misaligned primer ends. These misaligned primers can be extended by PolIV. Exhibits no 3'-5' exonuclease (proofreading) activity. May be involved in translesional synthesis, in conjunction with the beta clamp from PolIII. The protein is DNA polymerase IV of Desulfatibacillum aliphaticivorans.